A 129-amino-acid polypeptide reads, in one-letter code: Flagellar assembly factor FliW 2 (129 aa).

The protein belongs to the FliW family. As to quaternary structure, interacts with translational regulator CsrA and flagellin(s).

Its subcellular location is the cytoplasm. In terms of biological role, acts as an anti-CsrA protein, binds CsrA and prevents it from repressing translation of its target genes, one of which is flagellin. Binds to flagellin and participates in the assembly of the flagellum. The polypeptide is Flagellar assembly factor FliW 2 (Helicobacter pylori (strain J99 / ATCC 700824) (Campylobacter pylori J99)).